Reading from the N-terminus, the 212-residue chain is Pyridoxine/pyridoxamine 5'-phosphate oxidase (212 aa).

Substrate is bound by residues 7–10 (RAKY) and Lys65. Residues 60–65 (RTVLLK), 75–76 (FT), Lys82, and Gln104 each bind FMN. Substrate-binding residues include Tyr122, Arg126, and Ser130. FMN contacts are provided by residues 139 to 140 (QS) and Trp184. A substrate-binding site is contributed by 190–192 (RLH). Residue Arg194 participates in FMN binding.

Belongs to the pyridoxamine 5'-phosphate oxidase family. As to quaternary structure, homodimer. FMN is required as a cofactor.

It carries out the reaction pyridoxamine 5'-phosphate + O2 + H2O = pyridoxal 5'-phosphate + H2O2 + NH4(+). The enzyme catalyses pyridoxine 5'-phosphate + O2 = pyridoxal 5'-phosphate + H2O2. Its pathway is cofactor metabolism; pyridoxal 5'-phosphate salvage; pyridoxal 5'-phosphate from pyridoxamine 5'-phosphate: step 1/1. It participates in cofactor metabolism; pyridoxal 5'-phosphate salvage; pyridoxal 5'-phosphate from pyridoxine 5'-phosphate: step 1/1. Its function is as follows. Catalyzes the oxidation of either pyridoxine 5'-phosphate (PNP) or pyridoxamine 5'-phosphate (PMP) into pyridoxal 5'-phosphate (PLP). The sequence is that of Pyridoxine/pyridoxamine 5'-phosphate oxidase from Aliarcobacter butzleri (strain RM4018) (Arcobacter butzleri).